The chain runs to 2507 residues: Putative neurobeachin homolog (2507 aa).

3 disordered regions span residues 1 to 109 (MEIS…PPLP), 1307 to 1377 (PSSP…DGGR), and 1629 to 1649 (SRHEEANLPEGEKNEEPEISE). Over residues 24-37 (PVEEGEEVNDEESN) the composition is skewed to acidic residues. Over residues 1317-1340 (TTQKQENSENVNSETSPENGSNGK) the composition is skewed to polar residues. Over residues 1360 to 1372 (DGEEEENGEEGQG) the composition is skewed to acidic residues. The 109-residue stretch at 1690–1798 (PSSQSACFST…AVKKVVYQLP (109 aa)) folds into the BEACH-type PH domain. Residues 1817 to 2106 (MTPRQLFKHS…QLLTEAHPPR (290 aa)) enclose the BEACH domain. WD repeat units lie at residues 2265 to 2308 (GHGD…GFIA), 2326 to 2365 (GHEASISALCVSAEHGLVVSGCEDGVILIHTTSSDLLRRI), 2405 to 2444 (LVDDKIECVTVTRDGEFAVTGAVNGRINIWRMFPLTKLYT), and 2447 to 2486 (PLNSAVRSVAVVASHRFILGGLDSGAIVVFNADFNRWHYE).

It belongs to the WD repeat neurobeachin family. As to quaternary structure, interacts with RII subunit of PKA. In terms of tissue distribution, expressed in vulval precursor cells and rectal epithelia in L2 and L3 larvae. In L4 larvae, expression is seen in intestinal epithelial cells.

The protein resides in the cytoplasm. It is found in the membrane. The protein localises to the nucleus. Binds to type II regulatory subunits of protein kinase A and anchors/targets them to the membrane. May anchor the kinase to cytoskeletal and/or organelle-associated proteins. Regulates endosomal traffic in polarized epithelial cells such as the vulval precursor cells and intestinal cells. Thought to act as a negative regulator of lin-12 activity in vulval precursor cells. May have a role in the internalization process from basolateral surface of polarized epithelial cells. This Caenorhabditis elegans protein is Putative neurobeachin homolog (sel-2).